We begin with the raw amino-acid sequence, 268 residues long: Nickel import ATP-binding protein NikE (268 aa).

In terms of domain architecture, ABC transporter spans 4 to 252 (LNVCGLSHHY…SSDAGRVLQN (249 aa)). Residue 45-52 (GRSGCGKS) participates in ATP binding.

Belongs to the ABC transporter superfamily. Nickel importer (TC 3.A.1.5.3) family. As to quaternary structure, the complex is composed of two ATP-binding proteins (NikD and NikE), two transmembrane proteins (NikB and NikC) and a solute-binding protein (NikA).

It is found in the cell inner membrane. The catalysed reaction is Ni(2+)(out) + ATP + H2O = Ni(2+)(in) + ADP + phosphate + H(+). Functionally, part of the ABC transporter complex NikABCDE involved in nickel import. Responsible for energy coupling to the transport system. This is Nickel import ATP-binding protein NikE from Shigella flexneri.